The chain runs to 325 residues: Glutarate 2-hydroxylase (325 aa).

Residues His160, Asp162, and His292 each coordinate Fe cation.

The protein belongs to the glutarate hydroxylase family. Homotetramer. Requires Fe(2+) as cofactor.

It carries out the reaction glutarate + 2-oxoglutarate + O2 = (S)-2-hydroxyglutarate + succinate + CO2. It functions in the pathway amino-acid degradation. Functionally, acts as an alpha-ketoglutarate-dependent dioxygenase catalyzing hydroxylation of glutarate (GA) to L-2-hydroxyglutarate (L2HG). Functions in a L-lysine degradation pathway that proceeds via cadaverine, glutarate and L-2-hydroxyglutarate. In Escherichia coli O7:K1 (strain IAI39 / ExPEC), this protein is Glutarate 2-hydroxylase.